The primary structure comprises 313 residues: Inner membrane ABC transporter permease protein YdcU (313 aa).

The Cytoplasmic segment spans residues 1-25; it reads MAMNVLQSPSRPGLGKVSGFFWHNP. The helical transmembrane segment at 26-46 threads the bilayer; that stretch reads GLGLFLLLLGPLMWFGIVYFG. The Periplasmic portion of the chain corresponds to 47–92; the sequence is SLLTLLWQGFYTFDDFTMSVTPELTLANIRALFNPANYDIILRTLT. Positions 87 to 302 constitute an ABC transmembrane type-1 domain; sequence ILRTLTMAVA…PIILIALYLA (216 aa). The helical transmembrane segment at 93–113 threads the bilayer; sequence MAVAVTIASAILAFPMAWYMA. Over 114 to 122 the chain is Cytoplasmic; it reads RYTSGKMKA. The chain crosses the membrane as a helical span at residues 123–143; sequence FFYIAVMLPMWASYIVKAYAW. The Periplasmic portion of the chain corresponds to 144–154; it reads TLLLAKDGVAQ. Residues 155 to 175 traverse the membrane as a helical segment; sequence WFLQHLGLEPLLTAFLTLPAV. Residues 176–187 are Cytoplasmic-facing; that stretch reads GGNTLSTSGLGR. The helical transmembrane segment at 188 to 208 threads the bilayer; sequence FLVFLYIWLPFMILPVQAALE. Topologically, residues 209–230 are periplasmic; it reads RLPPSLLQASADLGARPRQTFR. Residues 231–251 form a helical membrane-spanning segment; that stretch reads YVVLPLAIPGIAAGSIFTFSL. Residue T252 is a topological domain, cytoplasmic. Residues 253-273 traverse the membrane as a helical segment; it reads LGDFIVPQLVGPPGYFIGNMV. Residues 274-283 lie on the Periplasmic side of the membrane; the sequence is YSQQGAIGNM. A helical membrane pass occupies residues 284–304; sequence PMAAAFTLVPIILIALYLAFV. The Cytoplasmic portion of the chain corresponds to 305 to 313; that stretch reads KRLGAFDAL.

It belongs to the binding-protein-dependent transport system permease family. CysTW subfamily.

Its subcellular location is the cell inner membrane. Its function is as follows. Probably part of the ABC transporter complex YdcSTUV. Probably responsible for the translocation of the substrate across the membrane. In Escherichia coli (strain K12), this protein is Inner membrane ABC transporter permease protein YdcU (ydcU).